A 420-amino-acid chain; its full sequence is Glutamyl-tRNA reductase (420 aa).

Substrate-binding positions include 49 to 52, S109, 114 to 116, and Q120; these read TCNR and EPQ. The Nucleophile role is filled by C50. 189-194 contacts NADP(+); the sequence is GAGETI.

The protein belongs to the glutamyl-tRNA reductase family. As to quaternary structure, homodimer.

The enzyme catalyses (S)-4-amino-5-oxopentanoate + tRNA(Glu) + NADP(+) = L-glutamyl-tRNA(Glu) + NADPH + H(+). It participates in porphyrin-containing compound metabolism; protoporphyrin-IX biosynthesis; 5-aminolevulinate from L-glutamyl-tRNA(Glu): step 1/2. Functionally, catalyzes the NADPH-dependent reduction of glutamyl-tRNA(Glu) to glutamate 1-semialdehyde (GSA). This is Glutamyl-tRNA reductase from Serratia proteamaculans (strain 568).